The chain runs to 455 residues: GTPase Der (455 aa).

2 EngA-type G domains span residues 4–169 (PVVA…PPKD) and 178–353 (IQLS…EQHR). GTP is bound by residues 10 to 17 (GRPNVGKS), 57 to 61 (DTGGL), 120 to 123 (NKCE), 184 to 191 (GRPNVGKS), 231 to 235 (DTAGI), and 296 to 299 (NKWD). Residues 354 to 439 (RRVSTSVVNE…PVKLFWRGKQ (86 aa)) form the KH-like domain.

It belongs to the TRAFAC class TrmE-Era-EngA-EngB-Septin-like GTPase superfamily. EngA (Der) GTPase family. Associates with the 50S ribosomal subunit.

Functionally, GTPase that plays an essential role in the late steps of ribosome biogenesis. The chain is GTPase Der from Synechococcus sp. (strain CC9311).